A 510-amino-acid polypeptide reads, in one-letter code: Cytochrome P450 11B2, mitochondrial (510 aa).

The transit peptide at 1–34 directs the protein to the mitochondrion; sequence MGACDNDFIELHSRVTADVWLARPWQCLHRTRAL. A 21-hydroxyprogesterone-binding site is contributed by Phe-391. Cys-457 is a heme binding site.

Belongs to the cytochrome P450 family. Heme serves as cofactor. In terms of tissue distribution, adrenal cortex.

The protein resides in the mitochondrion inner membrane. It catalyses the reaction a steroid + 2 reduced [adrenodoxin] + O2 + 2 H(+) = an 11beta-hydroxysteroid + 2 oxidized [adrenodoxin] + H2O. The catalysed reaction is 21-hydroxyprogesterone + 2 reduced [adrenodoxin] + O2 + 2 H(+) = corticosterone + 2 oxidized [adrenodoxin] + H2O. It carries out the reaction corticosterone + 2 reduced [adrenodoxin] + O2 + 2 H(+) = 18-hydroxycorticosterone + 2 oxidized [adrenodoxin] + H2O. The enzyme catalyses 18-hydroxycorticosterone + 2 reduced [adrenodoxin] + O2 + 2 H(+) = aldosterone + 2 oxidized [adrenodoxin] + 2 H2O. It catalyses the reaction 11-deoxycortisol + 2 reduced [adrenodoxin] + O2 + 2 H(+) = cortisol + 2 oxidized [adrenodoxin] + H2O. The catalysed reaction is cortisol + 2 reduced [adrenodoxin] + O2 + 2 H(+) = 18-hydroxycortisol + 2 oxidized [adrenodoxin] + H2O. It carries out the reaction 21-hydroxyprogesterone + 2 reduced [adrenodoxin] + O2 + 2 H(+) = 18-hydroxy-11-deoxycorticosterone + 2 oxidized [adrenodoxin] + H2O. The enzyme catalyses 18-hydroxycortisol + 2 reduced [adrenodoxin] + O2 + 2 H(+) = 18-oxocortisol + 2 oxidized [adrenodoxin] + 2 H2O. The protein operates within steroid biosynthesis. A cytochrome P450 monooxygenase that catalyzes the biosynthesis of aldosterone, the main mineralocorticoid responsible for salt and water homeostasis. Catalyzes three sequential oxidative reactions of 11-deoxycorticosterone (21-hydroxyprogesterone), namely 11-beta hydroxylation, followed by two successive oxidations at C18 yielding 18-hydroxy and then 18-oxo intermediates (that do not leave the enzyme active site during the consecutive hydroxylation reactions), and end with the formation of aldosterone. Can also produce 18-hydroxycortisol and 18-oxocortisol, derived from successive oxidations of cortisol at C18, normally found at very low levels, but significantly increased in primary aldosteronism, the most common form of secondary hypertension. Mechanistically, uses molecular oxygen inserting one oxygen atom into a substrate and reducing the second into a water molecule. Two electrons are provided by NADPH via a two-protein mitochondrial transfer system comprising flavoprotein FDXR (adrenodoxin/ferredoxin reductase) and nonheme iron-sulfur protein FDX1 or FDX2 (adrenodoxin/ferredoxin). Could also be involved in the androgen metabolic pathway. This Rattus norvegicus (Rat) protein is Cytochrome P450 11B2, mitochondrial (Cyp11b2).